Reading from the N-terminus, the 354-residue chain is Biotin synthase (354 aa).

The Radical SAM core domain occupies 40–258 (NEVQVSTLLS…IAVARILMPR (219 aa)). 3 residues coordinate [4Fe-4S] cluster: cysteine 55, cysteine 59, and cysteine 62. Residues cysteine 99, cysteine 130, cysteine 190, and arginine 262 each coordinate [2Fe-2S] cluster.

This sequence belongs to the radical SAM superfamily. Biotin synthase family. As to quaternary structure, homodimer. [4Fe-4S] cluster serves as cofactor. The cofactor is [2Fe-2S] cluster.

The enzyme catalyses (4R,5S)-dethiobiotin + (sulfur carrier)-SH + 2 reduced [2Fe-2S]-[ferredoxin] + 2 S-adenosyl-L-methionine = (sulfur carrier)-H + biotin + 2 5'-deoxyadenosine + 2 L-methionine + 2 oxidized [2Fe-2S]-[ferredoxin]. The protein operates within cofactor biosynthesis; biotin biosynthesis; biotin from 7,8-diaminononanoate: step 2/2. In terms of biological role, catalyzes the conversion of dethiobiotin (DTB) to biotin by the insertion of a sulfur atom into dethiobiotin via a radical-based mechanism. This Hahella chejuensis (strain KCTC 2396) protein is Biotin synthase.